A 135-amino-acid chain; its full sequence is HTH-type transcriptional repressor RghR (135 aa).

The 56-residue stretch at 8–63 (LRALREERKLTVNQLATYSGVSAAGISRIENGKRGVPKPATIKKLAEALKIPYEGL) folds into the HTH cro/C1-type domain. A DNA-binding region (H-T-H motif) is located at residues 19 to 38 (VNQLATYSGVSAAGISRIEN).

In terms of biological role, represses the expression of yvaM and both rapG and rapH. Binds directly to the promoter regions of yvaM, rapG and rapH. The protein is HTH-type transcriptional repressor RghR (rghR) of Bacillus subtilis (strain 168).